The following is a 674-amino-acid chain: Probable copper-transporting P-type ATPase B (674 aa).

Positions 1–22 (MNHSNQMHHDNHESHNHHSGHA) are disordered. The segment covering 7 to 16 (MHHDNHESHN) has biased composition (basic and acidic residues). 6 helical membrane-spanning segments follow: residues 32–52 (FFVS…MGIN), 57–77 (FTFP…FFYG), 95–115 (GMMT…LYAF), 127–147 (TMDF…GHWI), 284–304 (GYLF…WMLI), and 315–335 (LVTV…PLVT). D367 functions as the 4-aspartylphosphate intermediate in the catalytic mechanism. Residues D565 and D569 each coordinate Mg(2+). A run of 2 helical transmembrane segments spans residues 623 to 645 (LWWG…AFVG) and 649 to 671 (SPAV…AFTL).

It belongs to the cation transport ATPase (P-type) (TC 3.A.3) family. Type IB subfamily.

The protein localises to the cell membrane. It carries out the reaction Cu(+)(in) + ATP + H2O = Cu(+)(out) + ADP + phosphate + H(+). Its function is as follows. Involved in copper transport. The chain is Probable copper-transporting P-type ATPase B (copB) from Staphylococcus epidermidis (strain ATCC 12228 / FDA PCI 1200).